The following is a 72-amino-acid chain: DNA-directed RNA polymerase subunit omega (72 aa).

This sequence belongs to the RNA polymerase subunit omega family. In terms of assembly, the RNAP catalytic core consists of 2 alpha, 1 beta, 1 beta' and 1 omega subunit. When a sigma factor is associated with the core the holoenzyme is formed, which can initiate transcription.

The catalysed reaction is RNA(n) + a ribonucleoside 5'-triphosphate = RNA(n+1) + diphosphate. Its function is as follows. Promotes RNA polymerase assembly. Latches the N- and C-terminal regions of the beta' subunit thereby facilitating its interaction with the beta and alpha subunits. The polypeptide is DNA-directed RNA polymerase subunit omega (Francisella tularensis subsp. tularensis (strain FSC 198)).